The following is a 517-amino-acid chain: MALSDLVLLRWLRDSRHSRKLILFIVFLALLLDNMLLTVVVPIIPSYLYSIKHEKNTTEIQTARPALTASTSESFHSIFSYYNNSTVFTGNATGGLPGGESPKATTTQHTVTNTTVPPDCPSEDKDLLNENVQVGLLFASKATVQLLTNPFIGLLTNRIGYPIPMFAGFCIMFISTVMFAFSSSYAFLLIARSLQGIGSSCSSVAGMGMLASVYTDDEERGNAMGIALGGLAMGVLVGPPFGSVLYEFVGKTAPFLVLAALVLLDGAIQLFVLQPSRVQPESQKGTPLTTLLKDPYILIAAGSICFANMGIAMLEPALPIWMMETMCSRKWQLGVAFLPASISYLIGTNIFGILAHKMGRWLCALLGMIVVGISILCIPFAKNIYGLIAPNFGVGFAIGMVDSSMMPIMGYLVDLRHVSVYGSVYAIADVAFCMGYAIGPSAGGAIAKAIGFPWLMTIIGIIDIVFAPLCFFLRSPPAKEEKMAILMDHNCPIKTKMYTQNNVQPYPVGDDEESESD.

At 1 to 20 (MALSDLVLLRWLRDSRHSRK) the chain is on the cytoplasmic side. Residues 21-41 (LILFIVFLALLLDNMLLTVVV) form a helical membrane-spanning segment. Topologically, residues 42–132 (PIIPSYLYSI…EDKDLLNENV (91 aa)) are extracellular. 5 N-linked (GlcNAc...) asparagine glycosylation sites follow: asparagine 56, asparagine 83, asparagine 84, asparagine 91, and asparagine 113. Residues 100-119 (ESPKATTTQHTVTNTTVPPD) form a disordered region. Positions 105–115 (TTTQHTVTNTT) are enriched in low complexity. A disulfide bond links cysteine 120 and cysteine 327. A helical transmembrane segment spans residues 133 to 153 (QVGLLFASKATVQLLTNPFIG). Residues 154–162 (LLTNRIGYP) are Cytoplasmic-facing. A helical transmembrane segment spans residues 163-183 (IPMFAGFCIMFISTVMFAFSS). The Extracellular portion of the chain corresponds to 184–192 (SYAFLLIAR). Residues 193 to 213 (SLQGIGSSCSSVAGMGMLASV) form a helical membrane-spanning segment. Residues 214–222 (YTDDEERGN) are Cytoplasmic-facing. Residues 223–245 (AMGIALGGLAMGVLVGPPFGSVL) traverse the membrane as a helical segment. Residues leucine 231 and valine 235 each coordinate serotonin. Residues 246 to 251 (YEFVGK) lie on the Extracellular side of the membrane. A helical transmembrane segment spans residues 252-274 (TAPFLVLAALVLLDGAIQLFVLQ). Topologically, residues 275-294 (PSRVQPESQKGTPLTTLLKD) are cytoplasmic. A helical membrane pass occupies residues 295–314 (PYILIAAGSICFANMGIAML). Serotonin contacts are provided by asparagine 308, isoleucine 311, glutamate 315, phenylalanine 337, and tyrosine 344. The Extracellular portion of the chain corresponds to 315-331 (EPALPIWMMETMCSRKW). The helical transmembrane segment at 332 to 355 (QLGVAFLPASISYLIGTNIFGILA) threads the bilayer. Topologically, residues 356–360 (HKMGR) are cytoplasmic. Residues 361–381 (WLCALLGMIVVGISILCIPFA) traverse the membrane as a helical segment. Over 382–392 (KNIYGLIAPNF) the chain is Extracellular. Residues 393 to 413 (GVGFAIGMVDSSMMPIMGYLV) form a helical membrane-spanning segment. Aspartate 402 contributes to the serotonin binding site. The Cytoplasmic portion of the chain corresponds to 414-417 (DLRH). The helical transmembrane segment at 418-438 (VSVYGSVYAIADVAFCMGYAI) threads the bilayer. Tyrosine 436 is a serotonin binding site. Over 439–443 (GPSAG) the chain is Extracellular. The helical transmembrane segment at 444–465 (GAIAKAIGFPWLMTIIGIIDIV) threads the bilayer. Residues 466–517 (FAPLCFFLRSPPAKEEKMAILMDHNCPIKTKMYTQNNVQPYPVGDDEESESD) are Cytoplasmic-facing. A phosphoserine; by CK2 mark is found at serine 514 and serine 516.

This sequence belongs to the major facilitator superfamily. Vesicular transporter family. Interacts with SLC6A3. In terms of tissue distribution, expressed in striata and substantia nigra.

The protein resides in the cytoplasmic vesicle. The protein localises to the secretory vesicle. Its subcellular location is the synaptic vesicle membrane. It is found in the secretory vesicle membrane. It localises to the cell projection. The protein resides in the axon. The protein localises to the dendrite. The catalysed reaction is serotonin(in) + 2 H(+)(out) = serotonin(out) + 2 H(+)(in). It carries out the reaction dopamine(in) + 2 H(+)(out) = dopamine(out) + 2 H(+)(in). The enzyme catalyses histamine(in) + 2 H(+)(out) = histamine(out) + 2 H(+)(in). With respect to regulation, strongly inhibited by reserpine and tetrabenazine. Also inhibited to a lesser extent by ketanserin and fenfluramine. Reserpine and ketanserin inhibit by blocking the substrate-binding pocket. Tetrabenazine traps SLC18A2/VMAT2 in an occluded conformation and its inhibition is specific to SLC18A2/VMAT2 but not SLC18A1/VMAT1. In terms of biological role, electrogenic antiporter that exchanges one cationic monoamine with two intravesicular protons across the membrane of secretory and synaptic vesicles. Uses the electrochemical proton gradient established by the V-type proton-pump ATPase to accumulate high concentrations of monoamines inside the vesicles prior to their release via exocytosis. Transports a variety of catecholamines such as dopamine, adrenaline and noradrenaline, histamine, and indolamines such as serotonin. Regulates the transvesicular monoaminergic gradient that determines the quantal size. Mediates somatodendritic dopamine release in hippocampal neurons, likely as part of a regulated secretory pathway that integrates retrograde synaptic signals. Acts as a primary transporter for striatal dopamine loading ensuring impulse-dependent release of dopamine at the synaptic cleft. Responsible for histamine and serotonin storage and subsequent corelease from mast cell granules. In Mus musculus (Mouse), this protein is Synaptic vesicular amine transporter (Slc18a2).